The primary structure comprises 181 residues: Large ribosomal subunit protein bL17 (181 aa).

Residues 129-181 (AEKSEKSAKTAKAAKAPAKKATAKKASTKAVAAKKKAVKKAQKKDRAASAARA) are disordered. Over residues 145–171 (PAKKATAKKASTKAVAAKKKAVKKAQK) the composition is skewed to basic residues.

Belongs to the bacterial ribosomal protein bL17 family. As to quaternary structure, part of the 50S ribosomal subunit. Contacts protein L32.

In Bdellovibrio bacteriovorus (strain ATCC 15356 / DSM 50701 / NCIMB 9529 / HD100), this protein is Large ribosomal subunit protein bL17.